Reading from the N-terminus, the 308-residue chain is Olfactory receptor 4E2 (308 aa).

Residues 1–24 are Extracellular-facing; sequence MGALNQTRVTEFIFLGLTDNWVLE. An N-linked (GlcNAc...) asparagine glycan is attached at asparagine 5. Residues 25–45 traverse the membrane as a helical segment; that stretch reads ILFFVPFTVTYMLTLLGNFLI. Residues 46-57 lie on the Cytoplasmic side of the membrane; sequence VVTIVFTPRLHN. The helical transmembrane segment at 58-78 threads the bilayer; the sequence is PMYFFLSNLSFIDICHSSVTV. Residues 79–97 are Extracellular-facing; it reads PKMLEGLLLERKTISFDNC. Cysteine 97 and cysteine 179 are disulfide-bonded. The helical transmembrane segment at 98–118 threads the bilayer; it reads IAQLFFLHLFACSEIFLLTIM. The Cu cation site is built by histidine 105 and cysteine 109. Residues 119-143 lie on the Cytoplasmic side of the membrane; it reads AYDRYVAICIPLHYSNVMNMKVCVQ. The helical transmembrane segment at 144 to 164 threads the bilayer; that stretch reads LVFALWLGGTIHSLVQTFLTI. Residues 165-204 lie on the Extracellular side of the membrane; it reads RLPYCGPNIIDSYFCDVPPVIKLACTDTYLTGILIVSNSG. A helical transmembrane segment spans residues 205–225; sequence TISLVCFLALVTSYTVILFSL. The Cytoplasmic portion of the chain corresponds to 226–236; sequence RKQSAEGRRKA. Residues 237–257 form a helical membrane-spanning segment; sequence LSTCSAHFMVVALFFGPCIFL. The Extracellular segment spans residues 258-268; the sequence is YTRPDSSFSID. Arginine 260 contributes to the Cu cation binding site. A helical transmembrane segment spans residues 269-289; that stretch reads KVVSVFYTVVTPLLNPLIYTL. Residues 290–308 are Cytoplasmic-facing; that stretch reads RNEEVKTAMKHLRQRRICS.

The protein belongs to the G-protein coupled receptor 1 family. As to expression, expressed in olfactory epithelium, specifically in the olfactory sensory neurons of the septal organ.

The protein localises to the cell membrane. Copper binding enhances receptor activity in response to odorant binding. Functionally, olfactory receptor that is activated by the binding of organosulfur odorants with thioether groups such as (methylthio)methanethiol (MTMT) and bis(methylthiomethyl) disulfide. Also binds odorants cis-cyclooctene and tert-butyl mercaptan. The activity of this receptor is mediated by G proteins which activate adenylyl cyclase (Potential). In Mus musculus (Mouse), this protein is Olfactory receptor 4E2.